We begin with the raw amino-acid sequence, 497 residues long: 3-octaprenyl-4-hydroxybenzoate carboxy-lyase (497 aa).

Position 175 (N175) interacts with Mn(2+). Prenylated FMN-binding positions include 178–180 (IYR), 192–194 (RWL), and 197–198 (RG). E241 is a Mn(2+) binding site. Residue D290 is the Proton donor of the active site.

This sequence belongs to the UbiD family. Homohexamer. The cofactor is prenylated FMN. Mn(2+) is required as a cofactor.

The protein localises to the cell membrane. The catalysed reaction is a 4-hydroxy-3-(all-trans-polyprenyl)benzoate + H(+) = a 2-(all-trans-polyprenyl)phenol + CO2. It participates in cofactor biosynthesis; ubiquinone biosynthesis. Functionally, catalyzes the decarboxylation of 3-octaprenyl-4-hydroxy benzoate to 2-octaprenylphenol, an intermediate step in ubiquinone biosynthesis. The sequence is that of 3-octaprenyl-4-hydroxybenzoate carboxy-lyase from Escherichia coli O157:H7.